The chain runs to 704 residues: Transmembrane protein DDB_G0274347 (704 aa).

The disordered stretch occupies residues 37 to 145 (VEQRDEVNDE…NNYNNNNTPT (109 aa)). Over residues 43–67 (VNDEFQEEEEELEDDDDDEDDEDEI) the composition is skewed to acidic residues. Over residues 85 to 99 (HNDKEKEKKKDKQEE) the composition is skewed to basic and acidic residues. Residues 100–113 (YIDSDDDDDDDGDE) show a composition bias toward acidic residues. The span at 114–142 (NYYLNNNNNNNNNINNNNNYNNNNYNNNN) shows a compositional bias: low complexity. Asn166 carries N-linked (GlcNAc...) asparagine glycosylation. The chain crosses the membrane as a helical span at residues 255-275 (ALISMALLISLVAIIFYLPLP). Residue Asn354 is glycosylated (N-linked (GlcNAc...) asparagine). 3 helical membrane passes run 370–390 (LKIFGSCILFGVILFVVWLFA), 414–434 (TLLVIPLLSMLFWSLVLLYFI), and 513–533 (LVSFLWTIIVGSFIYHTFLIS). Positions 550 to 565 (TTTTTINTTTNTTSNT) are enriched in low complexity. Residues 550–576 (TTTTTINTTTNTTSNTSQQSNPLSKRL) are disordered. N-linked (GlcNAc...) asparagine glycosylation is found at Asn556, Asn560, and Asn564. A compositionally biased stretch (polar residues) spans 566–576 (SQQSNPLSKRL). A run of 2 helical transmembrane segments spans residues 609–629 (FIIVFIWTIAASLLWIYGVPP) and 638–658 (IFFIFIALAPLIKSIYNLIII).

It is found in the membrane. The sequence is that of Transmembrane protein DDB_G0274347 from Dictyostelium discoideum (Social amoeba).